Consider the following 544-residue polypeptide: CTP synthase (544 aa).

An amidoligase domain region spans residues 1–266 (MTKFIFVTGG…DDLICERFGL (266 aa)). Position 13 (Ser13) interacts with CTP. Position 13 (Ser13) interacts with UTP. ATP contacts are provided by residues 14–19 (SLGKGI) and Asp71. Asp71 and Glu140 together coordinate Mg(2+). CTP-binding positions include 147–149 (DIE), 187–192 (KTKPTQ), and Lys223. UTP-binding positions include 187-192 (KTKPTQ) and Lys223. The Glutamine amidotransferase type-1 domain maps to 291 to 543 (TVAMVGKYVE…VKAAKNYSEA (253 aa)). Gly354 lines the L-glutamine pocket. Cys381 functions as the Nucleophile; for glutamine hydrolysis in the catalytic mechanism. Residues 382–385 (LGMQ), Glu404, and Arg471 each bind L-glutamine. Active-site residues include His516 and Glu518.

The protein belongs to the CTP synthase family. In terms of assembly, homotetramer.

It catalyses the reaction UTP + L-glutamine + ATP + H2O = CTP + L-glutamate + ADP + phosphate + 2 H(+). The enzyme catalyses L-glutamine + H2O = L-glutamate + NH4(+). It carries out the reaction UTP + NH4(+) + ATP = CTP + ADP + phosphate + 2 H(+). The protein operates within pyrimidine metabolism; CTP biosynthesis via de novo pathway; CTP from UDP: step 2/2. Allosterically activated by GTP, when glutamine is the substrate; GTP has no effect on the reaction when ammonia is the substrate. The allosteric effector GTP functions by stabilizing the protein conformation that binds the tetrahedral intermediate(s) formed during glutamine hydrolysis. Inhibited by the product CTP, via allosteric rather than competitive inhibition. Its function is as follows. Catalyzes the ATP-dependent amination of UTP to CTP with either L-glutamine or ammonia as the source of nitrogen. Regulates intracellular CTP levels through interactions with the four ribonucleotide triphosphates. The chain is CTP synthase from Psychrobacter cryohalolentis (strain ATCC BAA-1226 / DSM 17306 / VKM B-2378 / K5).